Consider the following 460-residue polypeptide: V-type ATP synthase beta chain (460 aa).

The protein belongs to the ATPase alpha/beta chains family.

Its function is as follows. Produces ATP from ADP in the presence of a proton gradient across the membrane. The V-type beta chain is a regulatory subunit. This Clostridium novyi (strain NT) protein is V-type ATP synthase beta chain.